Here is a 302-residue protein sequence, read N- to C-terminus: Sulfate adenylyltransferase subunit 2 2 (302 aa).

This sequence belongs to the PAPS reductase family. CysD subfamily. In terms of assembly, heterodimer composed of CysD, the smaller subunit, and CysN.

The catalysed reaction is sulfate + ATP + H(+) = adenosine 5'-phosphosulfate + diphosphate. Its pathway is sulfur metabolism; hydrogen sulfide biosynthesis; sulfite from sulfate: step 1/3. In terms of biological role, with CysN forms the ATP sulfurylase (ATPS) that catalyzes the adenylation of sulfate producing adenosine 5'-phosphosulfate (APS) and diphosphate, the first enzymatic step in sulfur assimilation pathway. APS synthesis involves the formation of a high-energy phosphoric-sulfuric acid anhydride bond driven by GTP hydrolysis by CysN coupled to ATP hydrolysis by CysD. This is Sulfate adenylyltransferase subunit 2 2 from Alkalilimnicola ehrlichii (strain ATCC BAA-1101 / DSM 17681 / MLHE-1).